The primary structure comprises 373 residues: MAGWSCLVTGAGGFLGQRIVHLLAEEKELQEIRALDKAFRPELLEEFSKLQSKTKLTMVEGDILDEQCLKRACQGTSVVIHTASVIDVMNVIHRETIMNVNLKGTQLLLEACAQASVPIFIYTSTIEVAGPNSYRDIIQNAHEEEHLESTWSAPYPYSKKLAEKAVLAANGWALKNGGTLHTCALRPMYIYGEGSIFLYNYIYKALRNNGILTHHSKFSIVNPVYVGNVAWAHILALRALQDPKKAPSVQGQFYYISDDTPHQSYDDLNYNLSKEWGFSLDSRMSLPISLEYWLAFLLEIVSFLLSPIYKYQPPFNRHMVTLSNSIFTFSYKKAQRDLGYKPLFSWEEAKQKTTEWIGSLVKQHKETLKTKTH.

The active-site Proton acceptor is Y155. Residue K159 coordinates NAD(+). Residues 288–308 traverse the membrane as a helical segment; the sequence is ISLEYWLAFLLEIVSFLLSPI.

The protein belongs to the 3-beta-HSD family.

Its subcellular location is the endoplasmic reticulum membrane. The protein resides in the mitochondrion membrane. It catalyses the reaction a 3beta-hydroxy-Delta(5)-steroid + NAD(+) = a 3-oxo-Delta(5)-steroid + NADH + H(+). It carries out the reaction a 3-oxo-Delta(5)-steroid = a 3-oxo-Delta(4)-steroid. It participates in lipid metabolism; steroid biosynthesis. 3-beta-HSD is a bifunctional enzyme, that catalyzes the oxidative conversion of Delta(5)-ene-3-beta-hydroxy steroid, and the oxidative conversion of ketosteroids. The 3-beta-HSD enzymatic system plays a crucial role in the biosynthesis of all classes of hormonal steroids. In Canis lupus familiaris (Dog), this protein is 3 beta-hydroxysteroid dehydrogenase/Delta 5--&gt;4-isomerase (HSD3B).